Here is a 783-residue protein sequence, read N- to C-terminus: MSSDWDEIKRLAADFQKAQLTSTLQKLSERNCIEIVTLLLEKQLLDVVFTNDGKEYITPEHLEREIQDELYANGGRANLVEVSKTLNVDLSRIEKLAERIAADDPQIHLMLGQLIDEEYITHIAQEINEKLSQRGEISISDLTSQFDLPSDFLQHQVVEKHLGKLIKGRQDASNPRVFFTQAYIQRCKAKIRGALAAITKPTNVSVILQQISVQEKIFHSLLDEINPAGHVTSKQANAQYVPHIYAKTQADWVNSFYKQNSFLEYDAINKLGISDAKSYIRKQFPNEEFLFLKRVALGARLIELTVVASLNECSATKQYLDLSTILPSNLSEEDIEEAFNAVMAQKHCNPSQFVYLESIVFSQAYLTQLVQPCQEMAQSLAKTAIDNGVYQQYIVEKTLAQKAGNTLGTTHDADEDSKLDKRDERRKKATSGKAGGGSQGRETKTKSTKKHQRGRAAHNHDSDDEEDAVQQSANSSRKSVKSLELVKISDITNLIKGTLEEEGLEHLAKPVASLYLNQLNQMALAKAQELYEAAPQTNRRQTHAAIQERVNTLLVDIRLYEKGLKLFNGDTQTQLVKYLLKSLGNDICNELTLYVAAECSLMVKSTNLNVDQRVKLVQECDAQYRNALLEQNKALNKSIEEFEVATEAVLKACSMIIKKVDKKKDRQLIVGHKEKLLQQLLECQEPALLLHLAALILFTTITGCILHASGKFVSSILQHIRSTLNEPQNALLLRYHDLVLQVLQQTSPDSAESKSVNEQLQALQGEVMDLAQNYSRASVSKAD.

The segment at 406 to 476 is disordered; that stretch reads TLGTTHDADE…DAVQQSANSS (71 aa). A compositionally biased stretch (basic residues) spans 446 to 457; it reads KSTKKHQRGRAA.

Belongs to the UFL1 family.

Functionally, E3 UFM1-protein ligase that mediates ufmylation of target proteins. The chain is E3 UFM1-protein ligase 1 homolog from Drosophila grimshawi (Hawaiian fruit fly).